The chain runs to 190 residues: Small ribosomal subunit protein eS7x (190 aa).

Residue Met-1 is modified to N-acetylmethionine. The stretch at 17–50 (TECEEQVAQALFDLENTNQELKSELKDLYINQAV) forms a coiled coil.

Belongs to the eukaryotic ribosomal protein eS7 family.

This chain is Small ribosomal subunit protein eS7x (RPS7C), found in Arabidopsis thaliana (Mouse-ear cress).